The chain runs to 527 residues: Anthranilate synthase component 1 1 (527 aa).

S52 serves as a coordination point for L-tryptophan. Residues 53-72 (AEKTPASDPDGAFTPDTTTE) are disordered. 298-300 (PYM) is an L-tryptophan binding site. 333–334 (GT) contacts chorismate. Mg(2+) is bound at residue E360. Chorismate is bound by residues Y448, R468, 486 to 488 (GAG), and G488. E501 is a binding site for Mg(2+).

Belongs to the anthranilate synthase component I family. In terms of assembly, tetramer of two components I and two components II. Requires Mg(2+) as cofactor.

It catalyses the reaction chorismate + L-glutamine = anthranilate + pyruvate + L-glutamate + H(+). It participates in amino-acid biosynthesis; L-tryptophan biosynthesis; L-tryptophan from chorismate: step 1/5. The protein is Anthranilate synthase component 1 1 (trpE1) of Halobacterium salinarum (strain ATCC 700922 / JCM 11081 / NRC-1) (Halobacterium halobium).